The sequence spans 149 residues: Nucleoside diphosphate kinase (149 aa).

ATP is bound by residues K9, F57, R85, T91, R102, and N112. Catalysis depends on H115, which acts as the Pros-phosphohistidine intermediate.

It belongs to the NDK family. In terms of assembly, homotetramer. Mg(2+) serves as cofactor.

The protein localises to the cytoplasm. The catalysed reaction is a 2'-deoxyribonucleoside 5'-diphosphate + ATP = a 2'-deoxyribonucleoside 5'-triphosphate + ADP. It catalyses the reaction a ribonucleoside 5'-diphosphate + ATP = a ribonucleoside 5'-triphosphate + ADP. Functionally, major role in the synthesis of nucleoside triphosphates other than ATP. The ATP gamma phosphate is transferred to the NDP beta phosphate via a ping-pong mechanism, using a phosphorylated active-site intermediate. In Roseiflexus sp. (strain RS-1), this protein is Nucleoside diphosphate kinase.